The sequence spans 289 residues: MDKILLGCHVSMNKQNNYLVGSVNEAISYKANTFMIFTGPPQSTLRTNTNHLYINQMHELMNSYKIDAKDLVVHAPYIINIANSVDQNKWKFTVDFLIQEIKRCEEIKIPTLVLHPGSYTTGNYKDSLNQIIKALNIVSNYQVNVKIALETMSGKGTEVCSRLEDFKYILDNVKNKDKVGVCLDTCHLHDAGYDLSKWTEFKEQMKQNFSLDKVLCIHLNDSKNMISSHKDRHANIGYGYVGFDTLVNVVFDKDFSNISKILETPYIDKTPPYKIEIEDLLNKTFTNRL.

Residues His-74, His-115, Glu-150, Asp-184, His-187, His-218, Asp-231, His-233, and Glu-263 each contribute to the Zn(2+) site.

It belongs to the AP endonuclease 2 family. The cofactor is Zn(2+).

It carries out the reaction Endonucleolytic cleavage to 5'-phosphooligonucleotide end-products.. Functionally, endonuclease IV plays a role in DNA repair. It cleaves phosphodiester bonds at apurinic or apyrimidinic (AP) sites, generating a 3'-hydroxyl group and a 5'-terminal sugar phosphate. This is Probable endonuclease 4 from Mycoplasma mycoides subsp. mycoides SC (strain CCUG 32753 / NCTC 10114 / PG1).